The primary structure comprises 413 residues: Short-chain specific acyl-CoA dehydrogenase, mitochondrial (413 aa).

Residues 1 to 24 constitute a mitochondrion transit peptide; it reads MAAALLARACGPVRGALWPRDCRR. Position 27 is a phosphothreonine (Thr27). The residue at position 51 (Lys51) is an N6-acetyllysine; alternate. At Lys51 the chain carries N6-succinyllysine; alternate. An N6-acetyllysine modification is found at Lys72. Lys129 bears the N6-acetyllysine; alternate mark. Residue Lys129 is modified to N6-succinyllysine; alternate. Residues 152–161 and 185–187 contribute to the FAD site; these read FALSEPGNGS and WIT. Ser161 contributes to the substrate binding site. An N6-acetyllysine modification is found at Lys208. Position 262 is an N6-acetyllysine; alternate (Lys262). An N6-succinyllysine; alternate modification is found at Lys262. 269 to 272 contributes to the substrate binding site; the sequence is DMGR. Arg297 lines the FAD pocket. Lys306 bears the N6-acetyllysine; alternate mark. Lys306 carries the N6-succinyllysine; alternate modification. Residues Gln308 and 366–370 contribute to the FAD site; that span reads QILGG. Glu393 (proton acceptor) is an active-site residue. Gly394 is a binding site for substrate. 395–397 is a binding site for FAD; sequence TSE.

The protein belongs to the acyl-CoA dehydrogenase family. In terms of assembly, homotetramer. FAD serves as cofactor.

The protein resides in the mitochondrion matrix. The catalysed reaction is a short-chain 2,3-saturated fatty acyl-CoA + oxidized [electron-transfer flavoprotein] + H(+) = a short-chain (2E)-enoyl-CoA + reduced [electron-transfer flavoprotein]. It catalyses the reaction butanoyl-CoA + oxidized [electron-transfer flavoprotein] + H(+) = (2E)-butenoyl-CoA + reduced [electron-transfer flavoprotein]. It carries out the reaction pentanoyl-CoA + oxidized [electron-transfer flavoprotein] + H(+) = (2E)-pentenoyl-CoA + reduced [electron-transfer flavoprotein]. The enzyme catalyses hexanoyl-CoA + oxidized [electron-transfer flavoprotein] + H(+) = (2E)-hexenoyl-CoA + reduced [electron-transfer flavoprotein]. It functions in the pathway lipid metabolism; mitochondrial fatty acid beta-oxidation. Short-chain specific acyl-CoA dehydrogenase is one of the acyl-CoA dehydrogenases that catalyze the first step of mitochondrial fatty acid beta-oxidation, an aerobic process breaking down fatty acids into acetyl-CoA and allowing the production of energy from fats. The first step of fatty acid beta-oxidation consists in the removal of one hydrogen from C-2 and C-3 of the straight-chain fatty acyl-CoA thioester, resulting in the formation of trans-2-enoyl-CoA. Among the different mitochondrial acyl-CoA dehydrogenases, short-chain specific acyl-CoA dehydrogenase acts specifically on acyl-CoAs with saturated 4 to 6 carbons long primary chains. The chain is Short-chain specific acyl-CoA dehydrogenase, mitochondrial (ACADS) from Sus scrofa (Pig).